Here is a 214-residue protein sequence, read N- to C-terminus: Ribosomal RNA large subunit methyltransferase E (214 aa).

S-adenosyl-L-methionine is bound by residues Gly-68, Trp-70, Asp-88, Asp-104, and Asp-129. The Proton acceptor role is filled by Lys-169.

The protein belongs to the class I-like SAM-binding methyltransferase superfamily. RNA methyltransferase RlmE family.

The protein resides in the cytoplasm. It carries out the reaction uridine(2552) in 23S rRNA + S-adenosyl-L-methionine = 2'-O-methyluridine(2552) in 23S rRNA + S-adenosyl-L-homocysteine + H(+). Its function is as follows. Specifically methylates the uridine in position 2552 of 23S rRNA at the 2'-O position of the ribose in the fully assembled 50S ribosomal subunit. The sequence is that of Ribosomal RNA large subunit methyltransferase E from Magnetococcus marinus (strain ATCC BAA-1437 / JCM 17883 / MC-1).